A 165-amino-acid polypeptide reads, in one-letter code: Chorismate pyruvate-lyase (165 aa).

The substrate site is built by Met-35, Arg-77, Leu-115, and Glu-156.

The protein belongs to the UbiC family. In terms of assembly, monomer.

Its subcellular location is the cytoplasm. It catalyses the reaction chorismate = 4-hydroxybenzoate + pyruvate. The protein operates within cofactor biosynthesis; ubiquinone biosynthesis. In terms of biological role, removes the pyruvyl group from chorismate, with concomitant aromatization of the ring, to provide 4-hydroxybenzoate (4HB) for the ubiquinone pathway. The polypeptide is Chorismate pyruvate-lyase (Escherichia coli O17:K52:H18 (strain UMN026 / ExPEC)).